We begin with the raw amino-acid sequence, 435 residues long: Cyclic GMP-AMP synthase-like receptor (435 aa).

ATP is bound by residues Ser70 and Glu82–Asp84. 3 residues coordinate Mg(2+): Glu82, Asp84, and Asp209. Asp209 contributes to the GTP binding site. Residues Lys286 and Ser300 to Lys304 contribute to the ATP site. Residues Leu311, Asp312, and Asp317 each contribute to the Mn(2+) site.

It belongs to the mab-21 family. Mg(2+) is required as a cofactor. Requires Mn(2+) as cofactor.

It carries out the reaction GTP + ATP = 2',3'-cGAMP + 2 diphosphate. It catalyses the reaction GTP + ATP = pppGp(2'-5')A + diphosphate. The enzyme catalyses pppGp(2'-5')A = 2',3'-cGAMP + diphosphate. In terms of biological role, nucleotidyltransferase that catalyzes the formation of cyclic GMP-AMP (2',3'-cGAMP) from ATP and GTP and plays a key role in innate immunity. Directly binds some unknown ligand, activating the nucleotidyltransferase activity, leading to synthesis of 2',3'-cGAMP, a second messenger that binds to and activates Sting, thereby triggering the immune response via activation of the NF-kappa-B transcription factor. In Ctenocephalides felis (Cat flea), this protein is Cyclic GMP-AMP synthase-like receptor.